Reading from the N-terminus, the 409-residue chain is Peptidase T (409 aa).

Residue His-78 participates in Zn(2+) binding. Asp-80 is a catalytic residue. Position 140 (Asp-140) interacts with Zn(2+). Glu-173 serves as the catalytic Proton acceptor. Positions 174, 196, and 379 each coordinate Zn(2+).

The protein belongs to the peptidase M20B family. Requires Zn(2+) as cofactor.

It is found in the cytoplasm. The catalysed reaction is Release of the N-terminal residue from a tripeptide.. In terms of biological role, cleaves the N-terminal amino acid of tripeptides. The sequence is that of Peptidase T from Serratia proteamaculans (strain 568).